Reading from the N-terminus, the 117-residue chain is Cell division protein FtsB (117 aa).

Topologically, residues 1–6 (MRDWRW) are cytoplasmic. The helical transmembrane segment at 7–24 (MLLVLALLLGWLQYRFWF) threads the bilayer. The Periplasmic segment spans residues 25 to 117 (GPGNSGEVMM…QVGDHPADVP (93 aa)). Residues 29-69 (SGEVMMLEAQVANQERDNEGLQQRNDALAAEVKDLKEGQSA) are a coiled coil.

The protein belongs to the FtsB family. As to quaternary structure, part of a complex composed of FtsB, FtsL and FtsQ.

The protein localises to the cell inner membrane. Its function is as follows. Essential cell division protein. May link together the upstream cell division proteins, which are predominantly cytoplasmic, with the downstream cell division proteins, which are predominantly periplasmic. This chain is Cell division protein FtsB, found in Stenotrophomonas maltophilia (strain K279a).